The chain runs to 186 residues: MAIADVKKNAQAKMEKTLNSLSEELKKVRTGRAQVSMLDGIRVNYYGTPSPLSQVASISTPDAKSFLIAPWEVAILKDIEQAIIKSELGMAPMNDGKVIRLKVPDLTEERRKDLAKQVKKIAEEARVAVRMARRDANDEVKKLQKDKAVSEDEGKKAEADIQKVTDDFIKKVDQVAEEKEKAILTI.

The interval 135–156 (DANDEVKKLQKDKAVSEDEGKK) is disordered.

Belongs to the RRF family.

The protein resides in the cytoplasm. Responsible for the release of ribosomes from messenger RNA at the termination of protein biosynthesis. May increase the efficiency of translation by recycling ribosomes from one round of translation to another. The chain is Ribosome-recycling factor from Bdellovibrio bacteriovorus (strain ATCC 15356 / DSM 50701 / NCIMB 9529 / HD100).